The primary structure comprises 191 residues: Ribonuclease HII (191 aa).

The RNase H type-2 domain maps to 16–191 (INLIGIDEAG…KLHRKSFKLL (176 aa)). A divalent metal cation is bound by residues Asp-22, Glu-23, and Asp-110.

It belongs to the RNase HII family. Mn(2+) serves as cofactor. Mg(2+) is required as a cofactor.

Its subcellular location is the cytoplasm. It catalyses the reaction Endonucleolytic cleavage to 5'-phosphomonoester.. Functionally, endonuclease that specifically degrades the RNA of RNA-DNA hybrids. This Campylobacter jejuni subsp. jejuni serotype O:6 (strain 81116 / NCTC 11828) protein is Ribonuclease HII.